The following is a 122-amino-acid chain: Large ribosomal subunit protein uL18 (122 aa).

This sequence belongs to the universal ribosomal protein uL18 family. As to quaternary structure, part of the 50S ribosomal subunit; part of the 5S rRNA/L5/L18/L25 subcomplex. Contacts the 5S and 23S rRNAs.

Its function is as follows. This is one of the proteins that bind and probably mediate the attachment of the 5S RNA into the large ribosomal subunit, where it forms part of the central protuberance. This chain is Large ribosomal subunit protein uL18, found in Petrotoga mobilis (strain DSM 10674 / SJ95).